A 244-amino-acid chain; its full sequence is 1-(5-phosphoribosyl)-5-[(5-phosphoribosylamino)methylideneamino] imidazole-4-carboxamide isomerase (244 aa).

Residue aspartate 10 is the Proton acceptor of the active site. Aspartate 129 (proton donor) is an active-site residue.

Belongs to the HisA/HisF family.

The protein resides in the cytoplasm. The catalysed reaction is 1-(5-phospho-beta-D-ribosyl)-5-[(5-phospho-beta-D-ribosylamino)methylideneamino]imidazole-4-carboxamide = 5-[(5-phospho-1-deoxy-D-ribulos-1-ylimino)methylamino]-1-(5-phospho-beta-D-ribosyl)imidazole-4-carboxamide. Its pathway is amino-acid biosynthesis; L-histidine biosynthesis; L-histidine from 5-phospho-alpha-D-ribose 1-diphosphate: step 4/9. This Rhodococcus erythropolis (strain PR4 / NBRC 100887) protein is 1-(5-phosphoribosyl)-5-[(5-phosphoribosylamino)methylideneamino] imidazole-4-carboxamide isomerase.